The following is a 272-amino-acid chain: Transcription factor PU.1 (272 aa).

The disordered stretch occupies residues 126 to 165 (SPAHQQSSDEEEGERQSPPLEVSDGEADGLEPGPGLLHGE). Phosphoserine is present on residues serine 142 and serine 148. The span at 155-165 (LEPGPGLLHGE) shows a compositional bias: low complexity. The ETS DNA-binding region spans 172 to 255 (IRLYQFLLDL…VKKKLTYQFS (84 aa)). Residues lysine 219, arginine 232, arginine 235, and lysine 245 each contribute to the DNA site.

The protein belongs to the ETS family. As to quaternary structure, binds DNA as a monomer. Can form homomers. Directly interacts with CEBPD/NF-IL6-beta; this interaction does not affect DNA-binding properties of each partner. Interacts with NONO/p54(nrb). Interacts with RUNX1/AML1. Interacts with GFI1; the interaction represses SPI1 transcriptional activity, hence blocks SPI1-induced macrophage differentiation of myeloid progenitor cells. Interacts with CEBPE. Interacts with IRF4/Pip and IRF8. Interacts with JUN. Interacts with RB1. Interacts with TBP. In terms of tissue distribution, expressed in spleen, thymus and bone-marrow macrophages.

It localises to the nucleus. Transcriptional activity at macrophage-specific genes is inhibited by interaction with GFI1, which results in inhibition of SPI1-induced macrophage differentiation of myeloid progenitor cells, but not that of the granulocyte lineage. Pioneer transcription factor, which controls hematopoietic cell fate by decompacting stem cell heterochromatin and allowing other transcription factors to enter otherwise inaccessible genomic sites. Once in open chromatin, can directly control gene expression by binding genetic regulatory elements and can also more broadly influence transcription by recruiting transcription factors, such as interferon regulatory factors (IRFs), to otherwise inaccessible genomic regions. Transcriptionally activates genes important for myeloid and lymphoid lineages, such as CSF1R. Transcriptional activation from certain promoters, possibly containing low affinity binding sites, is achieved cooperatively with other transcription factors. FCER1A transactivation is achieved in cooperation with GATA1. May be particularly important for the pro- to pre-B cell transition. Binds (via the ETS domain) onto the purine-rich DNA core sequence 5'-GAGGAA-3', also known as the PU-box. In vitro can bind RNA and interfere with pre-mRNA splicing. The sequence is that of Transcription factor PU.1 (Spi1) from Mus musculus (Mouse).